A 153-amino-acid chain; its full sequence is Ubiquitin-conjugating enzyme E2 13 (153 aa).

Positions 3-149 constitute a UBC core domain; sequence SLPKRIIKET…AREWTKLYAK (147 aa). The Glycyl thioester intermediate role is filled by Cys-87. Lys-92 is covalently cross-linked (Glycyl lysine isopeptide (Lys-Gly) (interchain with G-Cter in ubiquitin)).

This sequence belongs to the ubiquitin-conjugating enzyme family. In terms of assembly, heterodimer with MMS2.

It catalyses the reaction S-ubiquitinyl-[E1 ubiquitin-activating enzyme]-L-cysteine + [E2 ubiquitin-conjugating enzyme]-L-cysteine = [E1 ubiquitin-activating enzyme]-L-cysteine + S-ubiquitinyl-[E2 ubiquitin-conjugating enzyme]-L-cysteine.. It participates in protein modification; protein ubiquitination. Has a role in the DNA error-free postreplication repair (PRR) pathway. The UBC13/MMS2 heterodimer catalyzes the synthesis of non-canonical poly-ubiquitin chains that are linked through 'Lys-63'. In Saccharomyces cerevisiae (strain ATCC 204508 / S288c) (Baker's yeast), this protein is Ubiquitin-conjugating enzyme E2 13 (UBC13).